The sequence spans 666 residues: Probable potassium transport system protein Kup (666 aa).

12 helical membrane passes run 16-36 (GFII…LYTM), 58-78 (ISLI…LVAL), 99-119 (TPWL…DGAL), 141-161 (IFQN…LLFA), 167-187 (TGVI…FLGI), 221-241 (IFIL…YSDL), 253-273 (WPFV…WILA), 292-312 (FTMH…QALI), 343-363 (TYIP…VLLF), 373-393 (YGLA…FFLI), 402-422 (VLLM…ASAV), and 424-444 (FMHG…IMTI).

Belongs to the HAK/KUP transporter (TC 2.A.72) family.

The protein resides in the cell membrane. It catalyses the reaction K(+)(in) + H(+)(in) = K(+)(out) + H(+)(out). In terms of biological role, transport of potassium into the cell. Likely operates as a K(+):H(+) symporter. The sequence is that of Probable potassium transport system protein Kup from Streptococcus agalactiae serotype Ia (strain ATCC 27591 / A909 / CDC SS700).